Here is a 599-residue protein sequence, read N- to C-terminus: Aspartate--tRNA(Asp/Asn) ligase (599 aa).

Glu183 serves as a coordination point for L-aspartate. Residues 207–210 (QIFK) form an aspartate region. Arg229 serves as a coordination point for L-aspartate. Residues 229-231 (RDE) and Gln238 each bind ATP. His456 is an L-aspartate binding site. Glu490 lines the ATP pocket. Arg497 is a binding site for L-aspartate. 542–545 (GLDR) serves as a coordination point for ATP.

Belongs to the class-II aminoacyl-tRNA synthetase family. Type 1 subfamily. Homodimer.

It localises to the cytoplasm. It catalyses the reaction tRNA(Asx) + L-aspartate + ATP = L-aspartyl-tRNA(Asx) + AMP + diphosphate. Its function is as follows. Aspartyl-tRNA synthetase with relaxed tRNA specificity since it is able to aspartylate not only its cognate tRNA(Asp) but also tRNA(Asn). Reaction proceeds in two steps: L-aspartate is first activated by ATP to form Asp-AMP and then transferred to the acceptor end of tRNA(Asp/Asn). The sequence is that of Aspartate--tRNA(Asp/Asn) ligase from Protochlamydia amoebophila (strain UWE25).